The chain runs to 284 residues: Hydrogenase expression/formation protein HupQ (284 aa).

The tract at residues 1-23 is disordered; the sequence is MIGTQSILPPGFGPGSHGEEDRL.

Belongs to the HupH/HyaF family.

This is Hydrogenase expression/formation protein HupQ (hupQ) from Azotobacter chroococcum mcd 1.